The primary structure comprises 466 residues: Glycylpeptide N-tetradecanoyltransferase (466 aa).

The segment at 1 to 21 (MDNENNKNTKNSQQDSSFSEG) is disordered. Positions 8 to 19 (NTKNSQQDSSFS) are enriched in polar residues. Ser17 carries the post-translational modification Phosphoserine. Residues 51-54 (FKFW), 185-187 (LCI), and 193-197 (SKRLT) each bind tetradecanoyl-CoA. Ile466 serves as the catalytic Proton acceptor; via carboxylate.

This sequence belongs to the NMT family. As to quaternary structure, monomer.

The protein localises to the cytoplasm. It catalyses the reaction N-terminal glycyl-[protein] + tetradecanoyl-CoA = N-tetradecanoylglycyl-[protein] + CoA + H(+). Its function is as follows. Adds a myristoyl group to the N-terminal glycine residue of certain cellular proteins. The protein is Glycylpeptide N-tetradecanoyltransferase (nmt1) of Schizosaccharomyces pombe (strain 972 / ATCC 24843) (Fission yeast).